The following is a 303-amino-acid chain: tRNA dimethylallyltransferase (303 aa).

12–19 (GTTASGKS) lines the ATP pocket. Substrate is bound at residue 14-19 (TASGKS). Residues 37–40 (DSRQ) are interaction with substrate tRNA.

It belongs to the IPP transferase family. In terms of assembly, monomer. It depends on Mg(2+) as a cofactor.

The catalysed reaction is adenosine(37) in tRNA + dimethylallyl diphosphate = N(6)-dimethylallyladenosine(37) in tRNA + diphosphate. Catalyzes the transfer of a dimethylallyl group onto the adenine at position 37 in tRNAs that read codons beginning with uridine, leading to the formation of N6-(dimethylallyl)adenosine (i(6)A). This is tRNA dimethylallyltransferase from Synechocystis sp. (strain ATCC 27184 / PCC 6803 / Kazusa).